The chain runs to 427 residues: Serine--tRNA ligase (427 aa).

Position 236 to 238 (236 to 238) interacts with L-serine; sequence TAE. An ATP-binding site is contributed by 267-269; sequence RSE. Residue glutamate 290 coordinates L-serine. Position 354-357 (354-357) interacts with ATP; that stretch reads EISS. Serine 388 contacts L-serine.

It belongs to the class-II aminoacyl-tRNA synthetase family. Type-1 seryl-tRNA synthetase subfamily. Homodimer. The tRNA molecule binds across the dimer.

The protein resides in the cytoplasm. The enzyme catalyses tRNA(Ser) + L-serine + ATP = L-seryl-tRNA(Ser) + AMP + diphosphate + H(+). The catalysed reaction is tRNA(Sec) + L-serine + ATP = L-seryl-tRNA(Sec) + AMP + diphosphate + H(+). It participates in aminoacyl-tRNA biosynthesis; selenocysteinyl-tRNA(Sec) biosynthesis; L-seryl-tRNA(Sec) from L-serine and tRNA(Sec): step 1/1. Functionally, catalyzes the attachment of serine to tRNA(Ser). Is also able to aminoacylate tRNA(Sec) with serine, to form the misacylated tRNA L-seryl-tRNA(Sec), which will be further converted into selenocysteinyl-tRNA(Sec). This chain is Serine--tRNA ligase, found in Psychrobacter arcticus (strain DSM 17307 / VKM B-2377 / 273-4).